The following is a 160-amino-acid chain: Transcription elongation factor GreA (160 aa).

Residues 1 to 31 adopt a coiled-coil conformation; the sequence is MAEKTYPMTLEEKEKLEKELEELKLVRRPEI.

Belongs to the GreA/GreB family.

Functionally, necessary for efficient RNA polymerase transcription elongation past template-encoded arresting sites. The arresting sites in DNA have the property of trapping a certain fraction of elongating RNA polymerases that pass through, resulting in locked ternary complexes. Cleavage of the nascent transcript by cleavage factors such as GreA or GreB allows the resumption of elongation from the new 3'terminus. GreA releases sequences of 2 to 3 nucleotides. This chain is Transcription elongation factor GreA, found in Streptococcus suis (strain 98HAH33).